The chain runs to 227 residues: Glial cell line-derived neurotrophic factor (227 aa).

The N-terminal stretch at 1 to 19 is a signal peptide; the sequence is MKLWAILAVCILLLSSVSS. A propeptide spanning residues 20–93 is cleaved from the precursor; the sequence is IPLPSNWLAG…EFIQDTIKRL (74 aa). 2 disordered regions span residues 32–61 and 93–113; these read RSHL…ANMA and LKRS…QSLA. 3 disulfides stabilise this stretch: Cys134/Cys195, Cys161/Cys224, and Cys165/Cys226. Asn142 and Asn178 each carry an N-linked (GlcNAc...) asparagine glycan.

Belongs to the TGF-beta family. GDNF subfamily. In terms of assembly, homodimer; disulfide-linked. Interacts with GFRA1 coreceptor and RET: forms a 2:2:2 ternary complex composed of GDNF ligand, GFRA1 and RET receptor. As to expression, from stage 22, expressed in somites and the pronephros. At stage 24 and 26, expressed in the pharyngeal arches I-III. At stage 31, expression in the eye, central nervous system and pharyngeal arches IV and V increases. Up to stage 34, expression becomes intense at the oral cavity and lateral line structures. At this stage, expression weakens in the pharyngeal arches, and increases in the epibranchial arches. Expressed in the digestive tract in stage 34 embryos.

It localises to the secreted. Neurotrophic factor that enhances survival and morphological differentiation of dopaminergic neurons and increases their high-affinity dopamine uptake. Acts by binding to its coreceptor, GFRA1, leading to autophosphorylation and activation of the RET receptor. In Xenopus laevis (African clawed frog), this protein is Glial cell line-derived neurotrophic factor.